A 185-amino-acid chain; its full sequence is Ribosome-recycling factor (185 aa).

Positions 128–158 (VRNTRQDANNKVKKLEKDKEISEDESKKAQE) are disordered.

This sequence belongs to the RRF family.

The protein resides in the cytoplasm. In terms of biological role, responsible for the release of ribosomes from messenger RNA at the termination of protein biosynthesis. May increase the efficiency of translation by recycling ribosomes from one round of translation to another. This is Ribosome-recycling factor from Helicobacter pylori (strain J99 / ATCC 700824) (Campylobacter pylori J99).